A 151-amino-acid polypeptide reads, in one-letter code: 3-hydroxyacyl-[acyl-carrier-protein] dehydratase FabZ (151 aa).

His52 is a catalytic residue.

Belongs to the thioester dehydratase family. FabZ subfamily.

Its subcellular location is the cytoplasm. The catalysed reaction is a (3R)-hydroxyacyl-[ACP] = a (2E)-enoyl-[ACP] + H2O. Its function is as follows. Involved in unsaturated fatty acids biosynthesis. Catalyzes the dehydration of short chain beta-hydroxyacyl-ACPs and long chain saturated and unsaturated beta-hydroxyacyl-ACPs. This Lactococcus lactis subsp. lactis (strain IL1403) (Streptococcus lactis) protein is 3-hydroxyacyl-[acyl-carrier-protein] dehydratase FabZ (fabZ1).